The primary structure comprises 835 residues: MIGILKKVFDVNQRQIKRMQKTVEQIDALESSIKPLTDEQLKGKTLEFKERLTKGETVDDLLPEAFAVVREAATRVLGMRPYGVQLMGGIALHEGNISEMKTGEGKTLTSTLPVYLNALTGKGVHVVTVNEYLAQRDANEMGQLHEFLGLTVGINLNSMSREEKQEAYAADITYSTNNELGFDYLRDNMVLYKEQCVQRPLHFAIIDEVDSILVDEARTPLIISGQAQKSTELYMFANAFVRTLENEKDYSFDVKTKNVMLTEDGITKAEKAFHIENLFDLKHVALLHHINQALRAHVVMHRDTDYVVQEGEIVIVDQFTGRLMKGRRYSEGLHQAIEAKEGVEIQNESMTLATITFQNYFRMYEKLSGMTGTAKTEEEEFRNIYNMNVIVIPTNKPIIRDDRADLIFKSMKGKFNAVVEDIVNRHKQGQPVLVGTVAIETSELISKMLTRKGVRHNILNAKNHAREADIIAEAGMKGAVTIATNMAGRGTDIKLGDDIKNIGLAVIGTERHESRRIDNQLRGRAGRQGDPGVTQFYLSMEDELMRRFGSDNMKAMMDRLGMDDSQPIESKMVSRAVESAQKRVEGNNYDARKQLLQYDDVLRQQREVIYKQRQEVMESENLRGIIEGMMKSTVERAVALHTQEEIEEDWNIKGLVDYLNTNLLQEGDVKEEELRRLAPEEMSEPIIAKLIERYNDKEKLMPEEQMREFEKVVVFRVVDTKWTEHIDAMDHLREGIHLRAYGQIDPLREYQMEGFAMFESMIASIEEEISRYIMKAEIEQNLERQEVVQGEAVHPSSDGEEAKKKPVVKGDQVGRNDLCKCGSGKKYKNCCGIGK.

ATP contacts are provided by residues Q85, 103–107 (GEGKT), and D492. A disordered region spans residues 788-807 (VQGEAVHPSSDGEEAKKKPV). 4 residues coordinate Zn(2+): C819, C821, C830, and C831.

This sequence belongs to the SecA family. Monomer and homodimer. Part of the essential Sec protein translocation apparatus which comprises SecA, SecYEG and auxiliary proteins SecDF. Other proteins may also be involved. It depends on Zn(2+) as a cofactor.

The protein localises to the cell membrane. Its subcellular location is the cytoplasm. It carries out the reaction ATP + H2O + cellular proteinSide 1 = ADP + phosphate + cellular proteinSide 2.. Its function is as follows. Part of the Sec protein translocase complex. Interacts with the SecYEG preprotein conducting channel. Has a central role in coupling the hydrolysis of ATP to the transfer of proteins into and across the cell membrane, serving as an ATP-driven molecular motor driving the stepwise translocation of polypeptide chains across the membrane. This Bacillus anthracis protein is Protein translocase subunit SecA 1.